Reading from the N-terminus, the 831-residue chain is Glucan 1,3-beta-glucosidase D (831 aa).

Positions 1–21 (MPSQSRSRDRYGRDSDRDRSR) are enriched in basic and acidic residues. Disordered regions lie at residues 1–246 (MPSQ…RGQS) and 261–288 (APDMEVRLRGGGRGPPRERRWEKDSDGS). Over 1-300 (MPSQSRSRDR…LTPFWKRKKW (300 aa)) the chain is Cytoplasmic. Acidic residues predominate over residues 32–41 (EDDDDDDDFD). Composition is skewed to basic and acidic residues over residues 42–70 (DNPRDRRYRRDGYRRAPVDSRAYDSHDDY), 78–94 (EPRRYRSDTERRRERAR), and 151–177 (DAARRLRRRERERERERRAETSKHKST). Residues 178 to 195 (DSSNSSAGLLNANALAKL) are compositionally biased toward low complexity. Composition is skewed to basic and acidic residues over residues 197-216 (AQHEELDRQEQRRAEKEAKA) and 275-286 (PPRERRWEKDSD). The chain crosses the membrane as a helical; Signal-anchor for type II membrane protein span at residues 301–321 (WWIGAIVLVIVVIIIVVAVVV). The Extracellular portion of the chain corresponds to 322-831 (SNNKKSDSDS…PSFGNLPEYY (510 aa)). The interval 325 to 360 (KKSDSDSDSDSNSGSSDSWGGDKSSLNGLDHDSIPK) is disordered. Low complexity predominate over residues 334–350 (DSNSGSSDSWGGDKSSL). 3 N-linked (GlcNAc...) asparagine glycosylation sites follow: N379, N396, and N547. E598 acts as the Proton donor in catalysis. N-linked (GlcNAc...) asparagine glycosylation is found at N611, N637, N670, and N690. E703 functions as the Nucleophile in the catalytic mechanism.

This sequence belongs to the glycosyl hydrolase 5 (cellulase A) family.

It is found in the cell membrane. The enzyme catalyses Successive hydrolysis of beta-D-glucose units from the non-reducing ends of (1-&gt;3)-beta-D-glucans, releasing alpha-glucose.. Its function is as follows. Glucosidase involved in the degradation of cellulosic biomass. Active on lichenan. This chain is Glucan 1,3-beta-glucosidase D (exgD), found in Emericella nidulans (strain FGSC A4 / ATCC 38163 / CBS 112.46 / NRRL 194 / M139) (Aspergillus nidulans).